A 432-amino-acid polypeptide reads, in one-letter code: Adenylosuccinate synthetase (432 aa).

GTP-binding positions include 13–19 (GDEGKGK) and 41–43 (GHT). The Proton acceptor role is filled by Asp14. Residues Asp14 and Gly41 each coordinate Mg(2+). IMP contacts are provided by residues 14 to 17 (DEGK), 39 to 42 (NAGH), Thr130, Arg144, Gln225, Thr240, and Arg304. His42 functions as the Proton donor in the catalytic mechanism. 300-306 (STTGRRR) is a substrate binding site. Residues Arg306, 332–334 (KID), and 415–417 (STG) contribute to the GTP site.

This sequence belongs to the adenylosuccinate synthetase family. As to quaternary structure, homodimer. The cofactor is Mg(2+).

The protein resides in the cytoplasm. It catalyses the reaction IMP + L-aspartate + GTP = N(6)-(1,2-dicarboxyethyl)-AMP + GDP + phosphate + 2 H(+). Its pathway is purine metabolism; AMP biosynthesis via de novo pathway; AMP from IMP: step 1/2. Its function is as follows. Plays an important role in the de novo pathway of purine nucleotide biosynthesis. Catalyzes the first committed step in the biosynthesis of AMP from IMP. The polypeptide is Adenylosuccinate synthetase (Blochmanniella pennsylvanica (strain BPEN)).